Here is a 206-residue protein sequence, read N- to C-terminus: Small ribosomal subunit protein uS4 (206 aa).

One can recognise an S4 RNA-binding domain in the interval 96 to 156 (TRLDNVVYRM…EKSRTQARIK (61 aa)).

This sequence belongs to the universal ribosomal protein uS4 family. As to quaternary structure, part of the 30S ribosomal subunit. Contacts protein S5. The interaction surface between S4 and S5 is involved in control of translational fidelity.

In terms of biological role, one of the primary rRNA binding proteins, it binds directly to 16S rRNA where it nucleates assembly of the body of the 30S subunit. With S5 and S12 plays an important role in translational accuracy. This is Small ribosomal subunit protein uS4 from Shewanella denitrificans (strain OS217 / ATCC BAA-1090 / DSM 15013).